A 760-amino-acid polypeptide reads, in one-letter code: E4 SUMO-protein ligase PIAL2 (760 aa).

An interacting domain (IND), required for interaction with MOM1 and PIAL1 region spans residues 143-301 (IKSPGSTFSQ…GVIEASPDSD (159 aa)). Residues 298–379 (PDSDIIEGPS…MAKILKDVEH (82 aa)) form an SP-RING-type zinc finger. Zn(2+) is bound by residues Cys-329, His-331, Cys-352, and Cys-355. A compositionally biased stretch (basic and acidic residues) spans 440–450 (GDNKVEDRKPC). Disordered regions lie at residues 440-471 (GDNKVEDRKPCMSDAQGQSNNNNTNKHPSNDD), 492-522 (LGNTAPQPHQASNTGTGQQYSNLSQIPMSID), 631-657 (GVRGLTSSHASTSRQHPSGPTVQSVSR), and 699-760 (SQQS…GPTS). Polar residues-rich tracts occupy residues 492-518 (LGNTAPQPHQASNTGTGQQYSNLSQIP), 631-653 (GVRGLTSSHASTSRQHPSGPTVQ), and 699-729 (SQQSQTSTRLNSSQPVQTPSVQTSQAQSPFT).

This sequence belongs to the PIAL protein ligase family. As to quaternary structure, homodimer. Interacts with MOM1 and PIAL1 to form a high molecular mass complex which mediates transcriptional silencing at heterochromatin regions. Expressed in leaves, stems and flowers, and, at low levels, in siliques and old leaves.

It is found in the nucleus. The protein operates within protein modification; protein sumoylation. Its function is as follows. Together with MOM1 and PIAL1, regulates transcriptional gene silencing (TGS) independently of changes in DNA methylation. E4-type SUMO ligase that promotes SUMO chain formation in a SCE1-dependent manner and thus contributes to a pathway for proteolytic removal of sumoylation substrates. Involved in stress responses and sulfur metabolism. The chain is E4 SUMO-protein ligase PIAL2 from Arabidopsis thaliana (Mouse-ear cress).